Reading from the N-terminus, the 142-residue chain is Large ribosomal subunit protein uL13 (142 aa).

This sequence belongs to the universal ribosomal protein uL13 family. Part of the 50S ribosomal subunit.

In terms of biological role, this protein is one of the early assembly proteins of the 50S ribosomal subunit, although it is not seen to bind rRNA by itself. It is important during the early stages of 50S assembly. The polypeptide is Large ribosomal subunit protein uL13 (Pyrococcus horikoshii (strain ATCC 700860 / DSM 12428 / JCM 9974 / NBRC 100139 / OT-3)).